The primary structure comprises 562 residues: Oxygen-dependent choline dehydrogenase (562 aa).

4–33 is an FAD binding site; that stretch reads DYIIIGAGSAGNVLATRLTEDPNTTVLLLE. The Proton acceptor role is filled by His-473.

The protein belongs to the GMC oxidoreductase family. FAD serves as cofactor.

It carries out the reaction choline + A = betaine aldehyde + AH2. The catalysed reaction is betaine aldehyde + NAD(+) + H2O = glycine betaine + NADH + 2 H(+). The protein operates within amine and polyamine biosynthesis; betaine biosynthesis via choline pathway; betaine aldehyde from choline (cytochrome c reductase route): step 1/1. Functionally, involved in the biosynthesis of the osmoprotectant glycine betaine. Catalyzes the oxidation of choline to betaine aldehyde and betaine aldehyde to glycine betaine at the same rate. The chain is Oxygen-dependent choline dehydrogenase from Escherichia coli (strain SMS-3-5 / SECEC).